The following is a 285-amino-acid chain: Acetyl-coenzyme A carboxylase carboxyl transferase subunit beta (285 aa).

In terms of domain architecture, CoA carboxyltransferase N-terminal spans 22–285 (LWTKCEACGA…HPGVAYAPGV (264 aa)). Cys-26, Cys-29, Cys-45, and Cys-48 together coordinate Zn(2+). Residues 26–48 (CEACGAQIYKKEFQENLHVCPKC) form a C4-type zinc finger.

Belongs to the AccD/PCCB family. In terms of assembly, acetyl-CoA carboxylase is a heterohexamer composed of biotin carboxyl carrier protein (AccB), biotin carboxylase (AccC) and two subunits each of ACCase subunit alpha (AccA) and ACCase subunit beta (AccD). Requires Zn(2+) as cofactor.

The protein resides in the cytoplasm. The enzyme catalyses N(6)-carboxybiotinyl-L-lysyl-[protein] + acetyl-CoA = N(6)-biotinyl-L-lysyl-[protein] + malonyl-CoA. It functions in the pathway lipid metabolism; malonyl-CoA biosynthesis; malonyl-CoA from acetyl-CoA: step 1/1. Component of the acetyl coenzyme A carboxylase (ACC) complex. Biotin carboxylase (BC) catalyzes the carboxylation of biotin on its carrier protein (BCCP) and then the CO(2) group is transferred by the transcarboxylase to acetyl-CoA to form malonyl-CoA. In Thermus thermophilus (strain ATCC BAA-163 / DSM 7039 / HB27), this protein is Acetyl-coenzyme A carboxylase carboxyl transferase subunit beta.